Reading from the N-terminus, the 356-residue chain is Phosphate acyltransferase (356 aa).

This sequence belongs to the PlsX family. In terms of assembly, homodimer. Probably interacts with PlsY.

It localises to the cytoplasm. It catalyses the reaction a fatty acyl-[ACP] + phosphate = an acyl phosphate + holo-[ACP]. The protein operates within lipid metabolism; phospholipid metabolism. Catalyzes the reversible formation of acyl-phosphate (acyl-PO(4)) from acyl-[acyl-carrier-protein] (acyl-ACP). This enzyme utilizes acyl-ACP as fatty acyl donor, but not acyl-CoA. This chain is Phosphate acyltransferase, found in Shigella sonnei (strain Ss046).